The chain runs to 903 residues: Protein translocase subunit SecA (903 aa).

Residues Q87, 105 to 109, and D507 contribute to the ATP site; that span reads GEGKT. Disordered regions lie at residues 565–584 and 855–877; these read ESRR…GDPG and AEPG…LASQ. Zn(2+) contacts are provided by C887, C889, C898, and H899.

The protein belongs to the SecA family. In terms of assembly, monomer and homodimer. Part of the essential Sec protein translocation apparatus which comprises SecA, SecYEG and auxiliary proteins SecDF-YajC and YidC. The cofactor is Zn(2+).

The protein resides in the cell inner membrane. Its subcellular location is the cytoplasm. The catalysed reaction is ATP + H2O + cellular proteinSide 1 = ADP + phosphate + cellular proteinSide 2.. Part of the Sec protein translocase complex. Interacts with the SecYEG preprotein conducting channel. Has a central role in coupling the hydrolysis of ATP to the transfer of proteins into and across the cell membrane, serving both as a receptor for the preprotein-SecB complex and as an ATP-driven molecular motor driving the stepwise translocation of polypeptide chains across the membrane. This is Protein translocase subunit SecA from Chromobacterium violaceum (strain ATCC 12472 / DSM 30191 / JCM 1249 / CCUG 213 / NBRC 12614 / NCIMB 9131 / NCTC 9757 / MK).